The following is a 225-amino-acid chain: Chalcone--flavanone isomerase 3 (225 aa).

Positions 51, 116, and 193 each coordinate substrate.

Belongs to the chalcone isomerase family.

The enzyme catalyses a chalcone = a flavanone.. It participates in secondary metabolite biosynthesis; flavonoid biosynthesis. Its function is as follows. Catalyzes the intramolecular cyclization of bicyclic chalcones into tricyclic (S)-flavanones. Responsible for the isomerization of 4,2',4',6'-tetrahydroxychalcone (also termed chalcone) into naringenin. In Lotus japonicus (Lotus corniculatus var. japonicus), this protein is Chalcone--flavanone isomerase 3 (CHI3).